A 465-amino-acid polypeptide reads, in one-letter code: UDP-N-acetylmuramate--L-alanine ligase (465 aa).

Residue 112-118 (GTHGKTT) coordinates ATP.

The protein belongs to the MurCDEF family.

Its subcellular location is the cytoplasm. It carries out the reaction UDP-N-acetyl-alpha-D-muramate + L-alanine + ATP = UDP-N-acetyl-alpha-D-muramoyl-L-alanine + ADP + phosphate + H(+). It participates in cell wall biogenesis; peptidoglycan biosynthesis. Its function is as follows. Cell wall formation. This chain is UDP-N-acetylmuramate--L-alanine ligase, found in Burkholderia cenocepacia (strain HI2424).